Reading from the N-terminus, the 369-residue chain is DNA replication and repair protein RecF (369 aa).

30–37 (GDNAQGKT) serves as a coordination point for ATP.

The protein belongs to the RecF family.

It localises to the cytoplasm. In terms of biological role, the RecF protein is involved in DNA metabolism; it is required for DNA replication and normal SOS inducibility. RecF binds preferentially to single-stranded, linear DNA. It also seems to bind ATP. The sequence is that of DNA replication and repair protein RecF from Streptococcus equi subsp. equi (strain 4047).